The sequence spans 313 residues: MDSDDSFVKTAHVIETSTPENKKLSHRFKSVEIVPPSSSNDDPFGFSSTKGIRLSSINSNDLVNTLSKGFNETSNMSYNRILPSSPPTLEIGEIDYNEALQIRSADENQQSVPTVSIASPSTPELPPSSSPLLPPNGSESSSPIPLSLLSTSSLQQRKITPSNLSNTSKPMDSKQLERLIPVPHGHHLTRLRKKRRRDDDIDLSGLYETKSSSPPAIHSDEDPSYSDSIARSPVKSAFNLRKRRKGVKEKKILKTYHSQDKDTASDNDNNTGSSDEENDNLKELTPGKKEYLKSIKKYFQDVDDYQLHVVNEG.

An FGF motif motif is present at residues 44–46; sequence FGF. The tract at residues 105–287 is disordered; that stretch reads ADENQQSVPT…NDNLKELTPG (183 aa). Positions 107–118 are enriched in polar residues; sequence ENQQSVPTVSIA. Residues 123–134 are compositionally biased toward pro residues; sequence PELPPSSSPLLP. Residues 135–154 show a composition bias toward low complexity; that stretch reads PNGSESSSPIPLSLLSTSSL. A compositionally biased stretch (polar residues) spans 155 to 170; the sequence is QQRKITPSNLSNTSKP. Basic residues predominate over residues 184-196; sequence HGHHLTRLRKKRR. Over residues 249 to 264 the composition is skewed to basic and acidic residues; it reads EKKILKTYHSQDKDTA. The interval 288–310 is C-terminal Sororin domain; it reads KKEYLKSIKKYFQDVDDYQLHVV.

The protein belongs to the sororin family. Interacts with Pds5 and Psm3.

Its subcellular location is the nucleus. In terms of biological role, regulator of sister chromatid cohesion in mitosis stabilizing cohesin complex association with chromatin. Antagonizes the action of wpl1 which stimulates cohesin dissociation from chromatin. Cohesion ensures that chromosome partitioning is accurate in dividing cells and may play an important role in DNA repair. The protein is Sororin-like protein 1 of Schizosaccharomyces pombe (strain 972 / ATCC 24843) (Fission yeast).